The sequence spans 100 residues: NAD(P)H-quinone oxidoreductase subunit 4L, chloroplastic (100 aa).

Transmembrane regions (helical) follow at residues 1–21 (MLENSLILGAYLFCLGIYGLT), 30–50 (LMCLELMLNGVNINLVAFSSF), and 60–80 (VFAIFIIAIAAAEAAIGLAII).

This sequence belongs to the complex I subunit 4L family. In terms of assembly, NDH is composed of at least 16 different subunits, 5 of which are encoded in the nucleus.

It localises to the plastid. The protein resides in the chloroplast thylakoid membrane. It catalyses the reaction a plastoquinone + NADH + (n+1) H(+)(in) = a plastoquinol + NAD(+) + n H(+)(out). The catalysed reaction is a plastoquinone + NADPH + (n+1) H(+)(in) = a plastoquinol + NADP(+) + n H(+)(out). NDH shuttles electrons from NAD(P)H:plastoquinone, via FMN and iron-sulfur (Fe-S) centers, to quinones in the photosynthetic chain and possibly in a chloroplast respiratory chain. The immediate electron acceptor for the enzyme in this species is believed to be plastoquinone. Couples the redox reaction to proton translocation, and thus conserves the redox energy in a proton gradient. The protein is NAD(P)H-quinone oxidoreductase subunit 4L, chloroplastic of Staurastrum punctulatum (Green alga).